A 223-amino-acid chain; its full sequence is MOB-like protein phocein (223 aa).

8 residues coordinate Zn(2+): cysteine 92, cysteine 97, cysteine 110, histidine 113, cysteine 119, histidine 127, histidine 169, and histidine 174.

Belongs to the MOB1/phocein family. In terms of assembly, part of the core of STRIPAK complexes composed of PP2A catalytic and scaffolding subunits, the striatins (PP2A regulatory subunits), the striatin-associated proteins MOB4, STRIP1 and STRIP2, PDCD10 and members of the STE20 kinases, such as STK24 and STK26.

It is found in the cytoplasm. The protein localises to the membrane. Its subcellular location is the golgi apparatus. The protein resides in the golgi stack membrane. In terms of biological role, part of the striatin-interacting phosphatase and kinase (STRIPAK) complexes. STRIPAK complexes have critical roles in protein (de)phosphorylation and are regulators of multiple signaling pathways including Hippo, MAPK, nuclear receptor and cytoskeleton remodeling. Different types of STRIPAK complexes are involved in a variety of biological processes such as cell growth, differentiation, apoptosis, metabolism and immune regulation. The polypeptide is MOB-like protein phocein (MOB4) (Gallus gallus (Chicken)).